The following is a 257-amino-acid chain: 3-deoxy-manno-octulosonate cytidylyltransferase (257 aa).

Belongs to the KdsB family.

It is found in the cytoplasm. It catalyses the reaction 3-deoxy-alpha-D-manno-oct-2-ulosonate + CTP = CMP-3-deoxy-beta-D-manno-octulosonate + diphosphate. It participates in nucleotide-sugar biosynthesis; CMP-3-deoxy-D-manno-octulosonate biosynthesis; CMP-3-deoxy-D-manno-octulosonate from 3-deoxy-D-manno-octulosonate and CTP: step 1/1. It functions in the pathway bacterial outer membrane biogenesis; lipopolysaccharide biosynthesis. Its function is as follows. Activates KDO (a required 8-carbon sugar) for incorporation into bacterial lipopolysaccharide in Gram-negative bacteria. The protein is 3-deoxy-manno-octulosonate cytidylyltransferase of Methylobacillus flagellatus (strain ATCC 51484 / DSM 6875 / VKM B-1610 / KT).